Consider the following 699-residue polypeptide: 1,4-alpha-glucan-branching enzyme (699 aa).

Residues 59–60 (NE) and 88–90 (WAP) contribute to the substrate site. W104 is a (1,4-alpha-D-glucosyl)n binding site. 115 to 118 (DYGK) lines the substrate pocket. Residue K140 coordinates (1,4-alpha-D-glucosyl)n. Y170 is modified (phosphotyrosine). 330-333 (EVLR) provides a ligand contact to substrate. The active-site Nucleophile is D354. E409 serves as the catalytic Proton donor.

This sequence belongs to the glycosyl hydrolase 13 family. GlgB subfamily. Monomer.

It carries out the reaction Transfers a segment of a (1-&gt;4)-alpha-D-glucan chain to a primary hydroxy group in a similar glucan chain.. The protein operates within glycan biosynthesis; glycogen biosynthesis. Its function is as follows. Glycogen-branching enzyme participates in the glycogen biosynthetic process along with glycogenin and glycogen synthase. Generates alpha-1,6-glucosidic branches from alpha-1,4-linked glucose chains, to increase solubility of the glycogen polymer. This Felis catus (Cat) protein is 1,4-alpha-glucan-branching enzyme (GBE1).